The following is a 545-amino-acid chain: Sterol O-acyltransferase 1 (545 aa).

Met1 is subject to N-acetylmethionine. Positions 1-24 are disordered; the sequence is MVGEETSLRNRLSRSAENPEQDEA. Topologically, residues 1 to 133 are cytoplasmic; that stretch reads MVGEETSLRN…LDELFEVDHI (133 aa). A Phosphoserine modification is found at Ser7. The segment covering 9–18 has biased composition (polar residues); sequence RNRLSRSAEN. His132 contributes to the cholesterol binding site. The helical transmembrane segment at 134-155 threads the bilayer; sequence RTIYHMFIALLIIFILSTLVVD. The Lumenal segment spans residues 156–175; the sequence is YIDEGRLVLEFSLLAYAFGQ. The helical transmembrane segment at 176 to 201 threads the bilayer; the sequence is FPIVIWTWWAMFLSTLAIPYFLFQRW. Residues 202–213 lie on the Cytoplasmic side of the membrane; that stretch reads AHGYSKSSHPLI. Residues 214–239 form a helical membrane-spanning segment; the sequence is YSLIHGAFFLVFQLGILGFIPTYVVL. Residues 240 to 247 are Lumenal-facing; it reads AYTLPPAS. A helical transmembrane segment spans residues 248–271; sequence RFILILEQIRLVMKAHSYVRENVP. At 272-314 the chain is on the cytoplasmic side; that stretch reads RVLSAAKEKSSTVPVPTVNQYLYFLFAPTLIYRDSYPRTPTVR. A helical transmembrane segment spans residues 315–347; the sequence is WGYVAMQFLQVFGCLFYVYYIFERLCAPLFRNI. Over 348-364 the chain is Lumenal; it reads KQEPFSARVLVLCVFNS. A helical membrane pass occupies residues 365–390; sequence ILPGVLMLFLSFFAFLHCWLNAFAEM. Residues 391–438 lie on the Cytoplasmic side of the membrane; sequence LRFGDRMFYKDWWNSTSYSNYYRTWNVVVHDWLYYYVYKDLLWFFSKR. Residues 398–404 carry the FYXDWWN motif motif; that stretch reads FYKDWWN. An acyl-CoA contacts are provided by Asn410, Arg413, Asn416, His420, Tyr428, and Ser451. The helical transmembrane segment at 439–463 threads the bilayer; it reads FRPAAMLAVFALSAVVHEYALAVCL. His455 is an active-site residue. The Lumenal portion of the chain corresponds to 464-469; it reads SYFYPV. The helical transmembrane segment at 470–485 threads the bilayer; that stretch reads LFVLFMFFGMAFNFIV. Residues 486 to 491 are Cytoplasmic-facing; the sequence is NDSRKR. Residues 492-523 form a helical membrane-spanning segment; sequence PVWNIMVRASLFLGHGVILCFYSQEWYARQRC. Residues Cys523 and Cys541 are joined by a disulfide bond. Residues 524 to 545 are Lumenal-facing; it reads PLKNPTFLDYVRPRTWTCRYVF.

The protein belongs to the membrane-bound acyltransferase family. Sterol o-acyltransferase subfamily. In terms of assembly, may form homo- or heterodimers. Interacts with UBIAD1.

The protein resides in the endoplasmic reticulum membrane. It catalyses the reaction a sterol + a long-chain fatty acyl-CoA = a long-chain 3-hydroxysterol ester + CoA. The catalysed reaction is cholesterol + an acyl-CoA = a cholesterol ester + CoA. The enzyme catalyses cholesterol + (9Z)-octadecenoyl-CoA = cholesteryl (9Z-octadecenoate) + CoA. It carries out the reaction cholesterol + hexadecanoyl-CoA = cholesteryl hexadecanoate + CoA. It catalyses the reaction octadecanoyl-CoA + cholesterol = cholesteryl octadecanoate + CoA. The catalysed reaction is (9Z,12Z)-octadecadienoyl-CoA + cholesterol = cholesteryl (9Z,12Z)-octadecadienoate + CoA. The enzyme catalyses (5Z,8Z,11Z,14Z)-eicosatetraenoyl-CoA + cholesterol = cholesteryl (5Z,8Z,11Z,14Z)-eicosatetraenoate + CoA. It carries out the reaction (9Z)-hexadecenoyl-CoA + cholesterol = cholesteryl (9Z)-hexadecenoate + CoA. It catalyses the reaction (11Z)-octadecenoyl-CoA + cholesterol = cholesteryl (11Z)-octadecenoate + CoA. The catalysed reaction is (7Z)-octadecenoyl-CoA + cholesterol = cholesteryl (7Z)-octadecenoate + CoA. Catalyzes the formation of fatty acid-cholesterol esters, which are less soluble in membranes than cholesterol. Plays a role in lipoprotein assembly and dietary cholesterol absorption. Preferentially utilizes oleoyl-CoA ((9Z)-octadecenoyl-CoA) as substrate: shows a higher activity towards an acyl-CoA substrate with a double bond at the delta-9 position (9Z) than towards saturated acyl-CoA or an unsaturated acyl-CoA with a double bond at the delta-7 (7Z) or delta-11 (11Z) positions. The sequence is that of Sterol O-acyltransferase 1 from Rattus norvegicus (Rat).